A 128-amino-acid polypeptide reads, in one-letter code: uncharacterized protein (128 aa).

An S1 motif domain is found at 6-74; the sequence is GSKLQGKITG…KDGKIGLSIK (69 aa). Positions 72–128 are disordered; the sequence is SIKKAKDRPQARPRNDFRPKESFEQKMNKFLKDSEDRLSSLKRNTESKRGGRGARRG. The span at 78-120 shows a compositional bias: basic and acidic residues; it reads DRPQARPRNDFRPKESFEQKMNKFLKDSEDRLSSLKRNTESKR.

Belongs to the peptidase U57 family.

This is an uncharacterized protein from Bacillus subtilis (strain 168).